Consider the following 295-residue polypeptide: Protoheme IX farnesyltransferase (295 aa).

9 consecutive transmembrane segments (helical) span residues 9-29, 36-56, 80-100, 108-128, 135-155, 163-183, 209-229, 230-250, and 265-285; these read ITKP…FFLA, FGVF…GCVF, LVSL…GVGL, LAAL…SLYL, GTLV…CAVS, LTLL…IAIF, IMLY…GGYA, GLNY…MAWK, and FVFS…DFQV.

Belongs to the UbiA prenyltransferase family. Protoheme IX farnesyltransferase subfamily.

The protein resides in the cell inner membrane. The enzyme catalyses heme b + (2E,6E)-farnesyl diphosphate + H2O = Fe(II)-heme o + diphosphate. It functions in the pathway porphyrin-containing compound metabolism; heme O biosynthesis; heme O from protoheme: step 1/1. Functionally, converts heme B (protoheme IX) to heme O by substitution of the vinyl group on carbon 2 of heme B porphyrin ring with a hydroxyethyl farnesyl side group. This Pseudomonas syringae pv. syringae (strain B728a) protein is Protoheme IX farnesyltransferase.